The chain runs to 156 residues: Arginine repressor (156 aa).

Belongs to the ArgR family.

Its subcellular location is the cytoplasm. It participates in amino-acid biosynthesis; L-arginine biosynthesis [regulation]. In terms of biological role, regulates arginine biosynthesis genes. The sequence is that of Arginine repressor from Shewanella sp. (strain ANA-3).